We begin with the raw amino-acid sequence, 96 residues long: Frd operon uncharacterized protein C (96 aa).

This sequence belongs to the HupF/HypC family.

This Proteus vulgaris protein is Frd operon uncharacterized protein C.